A 655-amino-acid polypeptide reads, in one-letter code: Putative sensor protein Sfri_3689 (655 aa).

Positions 1–17 (MKTLLLLLIIITMPVLA) are cleaved as a signal peptide. A helical membrane pass occupies residues 252–272 (FALAILVAIMSAIGMIFTGFI). Positions 419-653 (GIAHEINNPT…QIRLIFALAQ (235 aa)) constitute a Histidine kinase domain. His-422 bears the Phosphohistidine; by autocatalysis mark.

The protein localises to the cell membrane. It carries out the reaction ATP + protein L-histidine = ADP + protein N-phospho-L-histidine.. This chain is Putative sensor protein Sfri_3689, found in Shewanella frigidimarina (strain NCIMB 400).